A 124-amino-acid chain; its full sequence is MAIAKEDILAAVEGMTVLELNELVKAFEEKFGVSAAAVAVAGPAGGGAAAAAEEKTEFTVVLAEAGANKVSVIKAVRELTGLGLKEAKDLVDGAPKPIKEGVDKAAAEEAKKKLEEAGAKVEVK.

This sequence belongs to the bacterial ribosomal protein bL12 family. As to quaternary structure, homodimer. Part of the ribosomal stalk of the 50S ribosomal subunit. Forms a multimeric L10(L12)X complex, where L10 forms an elongated spine to which 2 to 4 L12 dimers bind in a sequential fashion. Binds GTP-bound translation factors.

Functionally, forms part of the ribosomal stalk which helps the ribosome interact with GTP-bound translation factors. Is thus essential for accurate translation. This Burkholderia cenocepacia (strain ATCC BAA-245 / DSM 16553 / LMG 16656 / NCTC 13227 / J2315 / CF5610) (Burkholderia cepacia (strain J2315)) protein is Large ribosomal subunit protein bL12.